The sequence spans 114 residues: Large ribosomal subunit protein bL19 (114 aa).

It belongs to the bacterial ribosomal protein bL19 family.

This protein is located at the 30S-50S ribosomal subunit interface and may play a role in the structure and function of the aminoacyl-tRNA binding site. This Bacillus mycoides (strain KBAB4) (Bacillus weihenstephanensis) protein is Large ribosomal subunit protein bL19.